A 410-amino-acid polypeptide reads, in one-letter code: Protein trichome birefringence-like 34 (410 aa).

A helical; Signal-anchor for type II membrane protein membrane pass occupies residues 13 to 33 (TSFHTIAAVLVAGLIFTAVFL). The short motif at 133–135 (GDS) is the GDS motif element. A DCXHWCLPGXXDXWN motif motif is present at residues 383–397 (DCIHWCLPGVPDVWN).

It belongs to the PC-esterase family. TBL subfamily.

The protein localises to the golgi apparatus membrane. May act as a bridging protein that binds pectin and other cell wall polysaccharides. Probably involved in maintaining esterification of pectins. May be involved in the specific O-acetylation of cell wall polymers. The chain is Protein trichome birefringence-like 34 (TBL34) from Arabidopsis thaliana (Mouse-ear cress).